The following is a 458-amino-acid chain: GTPase Obg (458 aa).

The Obg domain maps to 1–157 (MSFLDRVKIY…ITLYLELKVL (157 aa)). An OBG-type G domain is found at 158 to 326 (ADLGLVGFPN…VLNEIVKVIS (169 aa)). Residues 164–171 (GFPNAGKS), 189–193 (FTTLN), 210–213 (DIPG), 280–283 (NKAD), and 307–309 (SAA) each bind GTP. Residues serine 171 and threonine 191 each coordinate Mg(2+). Positions 341 to 419 (AVHGVEPLFK…VGQKEFEWSG (79 aa)) constitute an OCT domain. Residues 420–458 (TELDSERAEQPDFEGYKRRTTQAERLEKRRQRRLKKEEK) form a disordered region. Positions 423 to 446 (DSERAEQPDFEGYKRRTTQAERLE) are enriched in basic and acidic residues. A compositionally biased stretch (basic residues) spans 447-458 (KRRQRRLKKEEK).

It belongs to the TRAFAC class OBG-HflX-like GTPase superfamily. OBG GTPase family. As to quaternary structure, monomer. Mg(2+) serves as cofactor.

It localises to the cytoplasm. An essential GTPase which binds GTP, GDP and possibly (p)ppGpp with moderate affinity, with high nucleotide exchange rates and a fairly low GTP hydrolysis rate. Plays a role in control of the cell cycle, stress response, ribosome biogenesis and in those bacteria that undergo differentiation, in morphogenesis control. The chain is GTPase Obg from Elusimicrobium minutum (strain Pei191).